Reading from the N-terminus, the 285-residue chain is MAEGDYNAVREAIADILDNDDYDDGSIGPVLVRLAWHASGTYDKATGTGGSNGATMRYMKEAKDEANNGLENARQFLEPIKAKFPWITYADLWTLAGVVAIEEMDGPKVPWKPGRQDYVDETNVPPNGRLPDGAQGQDHLRDIFYRMGFNDQEIVALCGAHNMGRCHMDRSGFEGAWVPNPIRFANTYFKLLMNEEWKLTTLKNGVKQYFNEDEELMMLPADYSLMQDPEFHKWVEIYAADKEKFFEDFSKVFAKLIELGVRRGPDGKAKTNFIDRNNNDPNPRL.

Catalysis depends on histidine 37, which acts as the Proton acceptor. Histidine 161 contacts heme b. The active-site Tryptophan radical intermediate is the tryptophan 177.

Belongs to the peroxidase family. Cytochrome c peroxidase subfamily. In terms of assembly, forms a one-to-one complex with cytochrome c. Requires heme b as cofactor.

Its subcellular location is the mitochondrion matrix. It localises to the mitochondrion intermembrane space. It catalyses the reaction 2 Fe(II)-[cytochrome c] + H2O2 + 2 H(+) = 2 Fe(III)-[cytochrome c] + 2 H2O. Functionally, destroys radicals which are normally produced within the cells and which are toxic to biological systems. This chain is Putative cytochrome c peroxidase, mitochondrial, found in Yarrowia lipolytica (strain CLIB 122 / E 150) (Yeast).